A 283-amino-acid polypeptide reads, in one-letter code: NAD kinase (283 aa).

The active-site Proton acceptor is the aspartate 66. NAD(+) is bound by residues 66-67, 137-138, arginine 165, aspartate 167, and 178-183; these read DG, ND, and TGYSLS.

Belongs to the NAD kinase family. It depends on a divalent metal cation as a cofactor.

The protein resides in the cytoplasm. It carries out the reaction NAD(+) + ATP = ADP + NADP(+) + H(+). Functionally, involved in the regulation of the intracellular balance of NAD and NADP, and is a key enzyme in the biosynthesis of NADP. Catalyzes specifically the phosphorylation on 2'-hydroxyl of the adenosine moiety of NAD to yield NADP. In Chloroherpeton thalassium (strain ATCC 35110 / GB-78), this protein is NAD kinase.